The chain runs to 194 residues: Imidazoleglycerol-phosphate dehydratase (194 aa).

It belongs to the imidazoleglycerol-phosphate dehydratase family.

The protein resides in the cytoplasm. It catalyses the reaction D-erythro-1-(imidazol-4-yl)glycerol 3-phosphate = 3-(imidazol-4-yl)-2-oxopropyl phosphate + H2O. It functions in the pathway amino-acid biosynthesis; L-histidine biosynthesis; L-histidine from 5-phospho-alpha-D-ribose 1-diphosphate: step 6/9. This is Imidazoleglycerol-phosphate dehydratase from Clostridium kluyveri (strain NBRC 12016).